The primary structure comprises 139 residues: Serpin-like protein HMSD (139 aa).

Residues 1-20 (MSISSALAMVFMGAKGNTAA) form the signal peptide. Asn50 carries an N-linked (GlcNAc...) asparagine glycan.

It belongs to the serpin family. Highly expressed in dendritic cells and primary leukemia cells, especially those of myeloid lineage.

It localises to the secreted. Its function is as follows. Putative serine protease inhibitor. In Homo sapiens (Human), this protein is Serpin-like protein HMSD (HMSD).